A 210-amino-acid polypeptide reads, in one-letter code: Small ribosomal subunit protein uS3 (210 aa).

A KH type-2 domain is found at 39-107 (IREKLMEKLK…EILLDIQEVK (69 aa)).

It belongs to the universal ribosomal protein uS3 family. Part of the 30S ribosomal subunit. Forms a tight complex with proteins S10 and S14.

Functionally, binds the lower part of the 30S subunit head. Binds mRNA in the 70S ribosome, positioning it for translation. The protein is Small ribosomal subunit protein uS3 of Opitutus terrae (strain DSM 11246 / JCM 15787 / PB90-1).